A 103-amino-acid chain; its full sequence is MARAANPAPRLLGAAMLLLLLVAAGRRAAGAPVVNELRCQCLQTVQGIHLKNMQSVKVTPPGPHCGQTEVIATLKTGQEVCLNPAAPMVKKIIDKMLNQASSN.

The signal sequence occupies residues 1 to 30 (MARAANPAPRLLGAAMLLLLLVAAGRRAAG). Cystine bridges form between C39–C65 and C41–C81.

Belongs to the intercrine alpha (chemokine CxC) family.

It is found in the secreted. Its function is as follows. Has chemotactic activity for neutrophils. The polypeptide is Growth-regulated alpha protein (CXCL1) (Ovis aries (Sheep)).